The following is a 405-amino-acid chain: S-arrestin (405 aa).

Threonine 234 bears the Phosphothreonine mark.

It belongs to the arrestin family. In terms of assembly, monomer. Homodimer. Homotetramer. Interacts with RHO (via the phosphorylated C-terminus).

It localises to the cell projection. Its subcellular location is the cilium. It is found in the photoreceptor outer segment. The protein localises to the membrane. Its function is as follows. Binds to photoactivated, phosphorylated RHO and terminates RHO signaling via G-proteins by competing with G-proteins for the same binding site on RHO. May play a role in preventing light-dependent degeneration of retinal photoreceptor cells. In Canis lupus familiaris (Dog), this protein is S-arrestin (SAG).